We begin with the raw amino-acid sequence, 304 residues long: Phosphatidylinositol mannoside acyltransferase (304 aa).

The Proton acceptor role is filled by His126. Hexadecanoyl-CoA-binding residues include His126 and Arg164. Glu200 is an active-site residue. Hexadecanoyl-CoA-binding residues include Ser206 and Glu229.

Belongs to the LpxL/LpxM/LpxP family. As to quaternary structure, monomer.

The protein resides in the cell inner membrane. It catalyses the reaction a 2,6-O-bis(alpha-D-mannopyranosyl)-1-phosphatidyl-1D-myo-inositol + an acyl-CoA = a 2-O-(alpha-D-mannosyl)-6-O-(6-O-acyl-alpha-D-mannosyl)-1-phosphatidyl-1D-myo-inositol + CoA. The enzyme catalyses a 1,2-diacyl-sn-glycero-3-phospho-[alpha-D-mannopyranosyl-(1&lt;-&gt;6)-D-myo-inositol] + an acyl-CoA = a 1,2-diacyl-sn-glycero-3-phospho-[alpha-D-6-acyl-mannopyranosyl-(1&lt;-&gt;6)-D-myo-inositol] + CoA. It participates in phospholipid metabolism; phosphatidylinositol metabolism. Catalyzes the transfer of a palmitoyl moiety from palmitoyl-CoA to the 6-position of the mannose ring linked to the 2-position of myo-inositol in phosphatidyl-myo-inositol monomannoside (PIM1) or dimannoside (PIM2). This Mycolicibacterium smegmatis (strain ATCC 700084 / mc(2)155) (Mycobacterium smegmatis) protein is Phosphatidylinositol mannoside acyltransferase.